The following is a 259-amino-acid chain: Global transcriptional regulator CodY (259 aa).

Positions 1 to 155 (MNLLQKTRKI…GATVVGMEIL (155 aa)) are GAF domain. A DNA-binding region (H-T-H motif) is located at residues 203-222 (ASKIADRVGITRSVIVNALR). S215 bears the Phosphoserine mark.

This sequence belongs to the CodY family.

Its subcellular location is the cytoplasm. DNA-binding global transcriptional regulator which is involved in the adaptive response to starvation and acts by directly or indirectly controlling the expression of numerous genes in response to nutrient availability. During rapid exponential growth, CodY is highly active and represses genes whose products allow adaptation to nutrient depletion. This chain is Global transcriptional regulator CodY, found in Geobacillus sp. (strain WCH70).